A 620-amino-acid chain; its full sequence is Dihydroxy-acid dehydratase (620 aa).

Mg(2+) is bound at residue D82. C123 contacts [2Fe-2S] cluster. D124 and K125 together coordinate Mg(2+). The residue at position 125 (K125) is an N6-carboxylysine. C197 serves as a coordination point for [2Fe-2S] cluster. E493 serves as a coordination point for Mg(2+). The active-site Proton acceptor is S519.

Belongs to the IlvD/Edd family. In terms of assembly, homodimer. The cofactor is [2Fe-2S] cluster. Mg(2+) serves as cofactor.

The enzyme catalyses (2R)-2,3-dihydroxy-3-methylbutanoate = 3-methyl-2-oxobutanoate + H2O. It carries out the reaction (2R,3R)-2,3-dihydroxy-3-methylpentanoate = (S)-3-methyl-2-oxopentanoate + H2O. The protein operates within amino-acid biosynthesis; L-isoleucine biosynthesis; L-isoleucine from 2-oxobutanoate: step 3/4. It participates in amino-acid biosynthesis; L-valine biosynthesis; L-valine from pyruvate: step 3/4. Functions in the biosynthesis of branched-chain amino acids. Catalyzes the dehydration of (2R,3R)-2,3-dihydroxy-3-methylpentanoate (2,3-dihydroxy-3-methylvalerate) into 2-oxo-3-methylpentanoate (2-oxo-3-methylvalerate) and of (2R)-2,3-dihydroxy-3-methylbutanoate (2,3-dihydroxyisovalerate) into 2-oxo-3-methylbutanoate (2-oxoisovalerate), the penultimate precursor to L-isoleucine and L-valine, respectively. This is Dihydroxy-acid dehydratase from Bifidobacterium longum (strain NCC 2705).